A 133-amino-acid polypeptide reads, in one-letter code: Nucleoid-associated protein Mb3743c (133 aa).

The disordered stretch occupies residues 98–133 (GAMRPPAPPAAPPGAPGMPGMPGMPGAPGAPPVPGI). The span at 102–113 (PPAPPAAPPGAP) shows a compositional bias: pro residues.

Belongs to the YbaB/EbfC family. Homodimer.

It localises to the cytoplasm. The protein resides in the nucleoid. Functionally, binds to DNA and alters its conformation. May be involved in regulation of gene expression, nucleoid organization and DNA protection. This is Nucleoid-associated protein Mb3743c from Mycobacterium bovis (strain ATCC BAA-935 / AF2122/97).